A 318-amino-acid chain; its full sequence is Methionyl-tRNA formyltransferase (318 aa).

112–115 contacts (6S)-5,6,7,8-tetrahydrofolate; it reads SILP.

The protein belongs to the Fmt family.

The catalysed reaction is L-methionyl-tRNA(fMet) + (6R)-10-formyltetrahydrofolate = N-formyl-L-methionyl-tRNA(fMet) + (6S)-5,6,7,8-tetrahydrofolate + H(+). Attaches a formyl group to the free amino group of methionyl-tRNA(fMet). The formyl group appears to play a dual role in the initiator identity of N-formylmethionyl-tRNA by promoting its recognition by IF2 and preventing the misappropriation of this tRNA by the elongation apparatus. The sequence is that of Methionyl-tRNA formyltransferase from Shewanella baltica (strain OS155 / ATCC BAA-1091).